A 495-amino-acid chain; its full sequence is MNTHSAISELIAPWLELTDPKLAALVITHLELDSRLIKSGDTFVAIQGHAVDGRQFIDKAIAQGANLVLAEADAQHLNGWVEYRAGVPVIYLAELGQHLSELAGRLYGGHHNQLIGVTGTNGKTTITQLIAQWLELLGHKAAVMGTTGNGFLNALEPAANTTGNALQIQATLRDLAERGAQYTALETSSHGLVQGRVKKLHFVAGVFSNLSRDHLDYHGTMEAYAAAKFSLFSEHACQNAIINVDDAVGAQWVKQLPQAIGVSLVTKPNTAQAIWAREVAYAESGITLNFESSWGEGELHAPLIGEFNACNLLLALATLLSLGFEKSALLATAPKLRPVLGRMELFQREQKAKMVVDYAHTPDALEKALRALRVHCAGQLWAIVGCGGDRDRGKRPMMAAIAEQFADRVILTDDNPRSESPQAIVADMVAGLTYPERAHIEHHRFQAASYALQHAGAQDIILLAGKGHEDYQVLANETIHYSDRETAQQLLELQP.

UDP-N-acetyl-alpha-D-muramoyl-L-alanyl-D-glutamate is bound by residues L32 and S34. 119–125 contacts ATP; sequence GTNGKTT. UDP-N-acetyl-alpha-D-muramoyl-L-alanyl-D-glutamate contacts are provided by residues N160, 161–162, S188, Q194, and R196; that span reads TT. K228 bears the N6-carboxylysine mark. Residues R390, 414 to 417, G465, and E469 each bind meso-2,6-diaminopimelate; that span reads DNPR. A Meso-diaminopimelate recognition motif motif is present at residues 414 to 417; it reads DNPR.

The protein belongs to the MurCDEF family. MurE subfamily. It depends on Mg(2+) as a cofactor. In terms of processing, carboxylation is probably crucial for Mg(2+) binding and, consequently, for the gamma-phosphate positioning of ATP.

The protein resides in the cytoplasm. It catalyses the reaction UDP-N-acetyl-alpha-D-muramoyl-L-alanyl-D-glutamate + meso-2,6-diaminopimelate + ATP = UDP-N-acetyl-alpha-D-muramoyl-L-alanyl-gamma-D-glutamyl-meso-2,6-diaminopimelate + ADP + phosphate + H(+). It participates in cell wall biogenesis; peptidoglycan biosynthesis. Catalyzes the addition of meso-diaminopimelic acid to the nucleotide precursor UDP-N-acetylmuramoyl-L-alanyl-D-glutamate (UMAG) in the biosynthesis of bacterial cell-wall peptidoglycan. The polypeptide is UDP-N-acetylmuramoyl-L-alanyl-D-glutamate--2,6-diaminopimelate ligase (Vibrio cholerae serotype O1 (strain ATCC 39315 / El Tor Inaba N16961)).